The primary structure comprises 105 residues: UPF0473 protein SAG2089 (105 aa).

It belongs to the UPF0473 family.

The sequence is that of UPF0473 protein SAG2089 from Streptococcus agalactiae serotype V (strain ATCC BAA-611 / 2603 V/R).